Here is a 681-residue protein sequence, read N- to C-terminus: Pseudohemocyanin-2 (681 aa).

Residues 1–21 form the signal peptide; sequence VLLCSLVAATAAWPYFGGFQR. Residues asparagine 98, asparagine 191, asparagine 228, and asparagine 624 are each glycosylated (N-linked (GlcNAc...) asparagine).

Belongs to the tyrosinase family. Hemocyanin subfamily. Hexamer. As to expression, strongly expressed in ovaries. Also expressed in heart. Not detected in hepatopancreas, gills, connective tissue or muscle.

Functionally, does not function as a hemocyanin. The protein is Pseudohemocyanin-2 of Homarus americanus (American lobster).